The primary structure comprises 122 residues: EPIDERMAL PATTERNING FACTOR-like protein 1 (122 aa).

The N-terminal stretch at 1–26 (MFAIYKSTLLLLPLILILLITPQVSS) is a signal peptide. 3 disulfides stabilise this stretch: Cys55-Cys113, Cys59-Cys65, and Cys62-Cys115.

Belongs to the plant cysteine rich small secretory peptide family. Epidermal patterning factor subfamily.

It localises to the secreted. In terms of biological role, controls stomatal patterning. The chain is EPIDERMAL PATTERNING FACTOR-like protein 1 from Arabidopsis thaliana (Mouse-ear cress).